We begin with the raw amino-acid sequence, 243 residues long: Nuclear ubiquitous casein and cyclin-dependent kinase substrate 1 (243 aa).

The segment at 1–243 is disordered; sequence MSRPVRNRKV…SEDEAASGED (243 aa). Tyrosine 13 carries the phosphotyrosine modification. Serine 14 and serine 19 each carry phosphoserine. Tyrosine 26 is modified (phosphotyrosine). Basic residues predominate over residues 35–51; sequence KKIRSSPREAKNKRRSG. Phosphoserine occurs at positions 54, 58, 61, 73, 75, and 79. Residues 64 to 77 are compositionally biased toward basic and acidic residues; that stretch reads KDVKTKKDDSHSAE. A compositionally biased stretch (low complexity) spans 91–100; it reads QQRQAASKAA. Acidic residues predominate over residues 111–124; it reads VGSEEEPEEDDEAP. Phosphoserine is present on residues serine 113, serine 130, serine 132, and serine 144. Acidic residues predominate over residues 132–145; it reads SDEDFLMEDDDDSD. Basic residues predominate over residues 149–174; the sequence is SKKKNKKMVKKSKPERKEKKMPKPRL. Residue threonine 179 is modified to Phosphothreonine. Position 181 is a phosphoserine (serine 181). A compositionally biased stretch (basic and acidic residues) spans 197–206; it reads TSKEKTPSPK. At threonine 202 the chain carries Phosphothreonine. A phosphoserine mark is found at serine 204, serine 214, serine 223, serine 229, serine 234, and serine 240. Residues 232 to 243 are compositionally biased toward acidic residues; it reads EGSEDEAASGED.

Does not interact with RAD51. In terms of processing, phosphorylated in an ATM-dependent manner in response to DNA damage. Phosphorylated by CDK1 and casein kinase.

The protein resides in the nucleus. It localises to the chromosome. Its function is as follows. Chromatin-associated protein involved in DNA repair by promoting homologous recombination (HR). Binds double-stranded DNA (dsDNA) and secondary DNA structures, such as D-loop structures, but with less affinity than RAD51AP1. This is Nuclear ubiquitous casein and cyclin-dependent kinase substrate 1 from Rattus norvegicus (Rat).